A 207-amino-acid polypeptide reads, in one-letter code: Large ribosomal subunit protein uL3 (207 aa).

The segment at 113–148 is disordered; that stretch reads KGKGFQGPIKRHGQSRGPMAHGSRYHRRPGSMGPVA.

It belongs to the universal ribosomal protein uL3 family. Part of the 50S ribosomal subunit. Forms a cluster with proteins L14 and L19.

Its function is as follows. One of the primary rRNA binding proteins, it binds directly near the 3'-end of the 23S rRNA, where it nucleates assembly of the 50S subunit. The protein is Large ribosomal subunit protein uL3 of Lactococcus lactis subsp. lactis (strain IL1403) (Streptococcus lactis).